A 137-amino-acid polypeptide reads, in one-letter code: Bet1-like protein At4g14600 (137 aa).

The Cytoplasmic portion of the chain corresponds to 1–113 (MASNPHRSGA…MSIIRSGNNH (113 aa)). Residues 43 to 105 (DPMHSDLDDE…KNNIRKLNMS (63 aa)) enclose the t-SNARE coiled-coil homology domain. Residues 114-134 (IMHVVLFALLVFFVLYIWSKM) traverse the membrane as a helical; Anchor for type IV membrane protein segment. Topologically, residues 135-137 (FKR) are vesicular.

Belongs to the BET1 family.

The protein localises to the golgi apparatus membrane. It localises to the endoplasmic reticulum membrane. Functionally, required for vesicular transport from the ER to the Golgi complex. Functions as a SNARE associated with ER-derived vesicles. This Arabidopsis thaliana (Mouse-ear cress) protein is Bet1-like protein At4g14600.